Here is a 151-residue protein sequence, read N- to C-terminus: Large-conductance mechanosensitive channel (151 aa).

The next 2 membrane-spanning stretches (helical) occupy residues 12–32 (GNIV…ALVT) and 71–91 (VLLS…FLVV). Residues 125-151 (NSNSSGRHEAPGTAGTPPPNYGPRADT) form a disordered region.

The protein belongs to the MscL family. Homopentamer.

It is found in the cell membrane. Its function is as follows. Channel that opens in response to stretch forces in the membrane lipid bilayer. May participate in the regulation of osmotic pressure changes within the cell. This is Large-conductance mechanosensitive channel from Mycobacterium ulcerans (strain Agy99).